The following is a 75-amino-acid chain: uncharacterized protein (75 aa).

This is an uncharacterized protein from Mycobacterium tuberculosis (strain CDC 1551 / Oshkosh).